Consider the following 523-residue polypeptide: 2-isopropylmalate synthase (523 aa).

One can recognise a Pyruvate carboxyltransferase domain in the interval 5–267 (VIIFDTTLRD…HTNINHHEIW (263 aa)). Residues Asp14, His202, His204, and Asn238 each coordinate Mn(2+). The segment at 392–523 (RLDYFSVQSG…QNKENNKETV (132 aa)) is regulatory domain.

It belongs to the alpha-IPM synthase/homocitrate synthase family. LeuA type 1 subfamily. Homodimer. Mn(2+) is required as a cofactor.

It localises to the cytoplasm. The enzyme catalyses 3-methyl-2-oxobutanoate + acetyl-CoA + H2O = (2S)-2-isopropylmalate + CoA + H(+). It functions in the pathway amino-acid biosynthesis; L-leucine biosynthesis; L-leucine from 3-methyl-2-oxobutanoate: step 1/4. Catalyzes the condensation of the acetyl group of acetyl-CoA with 3-methyl-2-oxobutanoate (2-ketoisovalerate) to form 3-carboxy-3-hydroxy-4-methylpentanoate (2-isopropylmalate). This chain is 2-isopropylmalate synthase, found in Salmonella choleraesuis (strain SC-B67).